The following is a 148-amino-acid chain: Cyanate hydratase (148 aa).

Catalysis depends on residues arginine 89, glutamate 92, and serine 115.

Belongs to the cyanase family.

It carries out the reaction cyanate + hydrogencarbonate + 3 H(+) = NH4(+) + 2 CO2. Functionally, catalyzes the reaction of cyanate with bicarbonate to produce ammonia and carbon dioxide. The chain is Cyanate hydratase from Sulfurisphaera tokodaii (strain DSM 16993 / JCM 10545 / NBRC 100140 / 7) (Sulfolobus tokodaii).